The sequence spans 322 residues: MTTPQEDGFLRLKIASKEKIARDIWSFELTDPQGAPLPPFEAGANLTVAVPNGSRRTYSLCNDSQERNRYVIAVKRDSNGRGGSISFIDDTSEGDAVEVSLPRNEFPLDKRAKSFILVAGGIGITPMLSMARQLRAEGLRSFRLYYLTRDPEGTAFFDELTSDEWRSDVKIHHDHGDPTKAFDFWSVFEKSKPAQHVYCCGPQALMDTVRDMTGHWPSGTVHFESFGATNTNARENTPFTVRLSRSGTSFEIPANRSILEVLRDANVRVPSSCESGTCGSCKTALCSGEADHRDMVLRDDEKGTQIMVCVSRAKSAELVLDL.

The 103-residue stretch at 7 to 109 folds into the FAD-binding FR-type domain; that stretch reads DGFLRLKIAS…SLPRNEFPLD (103 aa). Residues 56–57, 73–75, 81–84, Thr-125, and Phe-226 each bind FMN; these read RT, AVK, and RGGS. One can recognise a 2Fe-2S ferredoxin-type domain in the interval 239–322; the sequence is FTVRLSRSGT…AKSAELVLDL (84 aa). Position 273 (Cys-273) interacts with [2Fe-2S] cluster. Residue Ser-275 coordinates FMN. Positions 278, 281, and 309 each coordinate [2Fe-2S] cluster.

The protein belongs to the PDR/VanB family. Monomer. Requires FMN as cofactor.

In terms of biological role, component of the electron transfer chain involved in pyridine nucleotide-dependent dihydroxylation of phthalate. Utilizes FMN to mediate electron transfer from the two-electron donor, NADH, to the one-electron acceptor, (2Fe-2S). The chain is Phthalate dioxygenase reductase (ophA1) from Burkholderia cepacia (Pseudomonas cepacia).